A 468-amino-acid chain; its full sequence is ATP synthase subunit beta (468 aa).

155-162 (GGAGVGKT) provides a ligand contact to ATP.

The protein belongs to the ATPase alpha/beta chains family. F-type ATPases have 2 components, CF(1) - the catalytic core - and CF(0) - the membrane proton channel. CF(1) has five subunits: alpha(3), beta(3), gamma(1), delta(1), epsilon(1). CF(0) has three main subunits: a(1), b(2) and c(9-12). The alpha and beta chains form an alternating ring which encloses part of the gamma chain. CF(1) is attached to CF(0) by a central stalk formed by the gamma and epsilon chains, while a peripheral stalk is formed by the delta and b chains.

The protein localises to the cell membrane. The catalysed reaction is ATP + H2O + 4 H(+)(in) = ADP + phosphate + 5 H(+)(out). Produces ATP from ADP in the presence of a proton gradient across the membrane. The catalytic sites are hosted primarily by the beta subunits. In Streptococcus agalactiae serotype III (strain NEM316), this protein is ATP synthase subunit beta.